Consider the following 720-residue polypeptide: Denticleless protein homolog (720 aa).

WD repeat units lie at residues 43–85 (GMPV…TTKL), 92–131 (AHSNAVFDLAWVPGEHRIVTASGDQTAKVWDVRAGELLGI), and 134–174 (GHQC…KDGF). The DDB1-binding motif signature appears at 164-167 (WDTR). The Nuclear localization signal motif lies at 193–200 (PSKLRKKR). 4 WD repeats span residues 211 to 250 (DFQQSVTVVLLQDEHTLISAGAVDGVIKVWDLRKNYAAYR), 266 to 305 (TRKLGYSSLVLDSTGANLFANCTDDSIYMFNMTSLKTFPV), 310 to 351 (GHQN…LPPR), and 355 to 395 (GHSQ…EEEK). The DDB1-binding motif motif lies at 240–243 (WDLR). Disordered regions lie at residues 411 to 437 (KPEEQRGAGRSASPQSTPAKAFSVGSP), 476 to 495 (PAKLSGASPRTSPKLVPSSK), 528 to 552 (QSLLETSSTPKAQHSQAEKRAKRRL), and 607 to 698 (NEHE…TSPK). Polar residues predominate over residues 528–542 (QSLLETSSTPKAQHS). Composition is skewed to basic and acidic residues over residues 543 to 552 (QAEKRAKRRL) and 642 to 660 (CERDSDVVDKENSSPERKN).

The protein belongs to the WD repeat cdt2 family. Component of the DCX(DTL) E3 ubiquitin ligase complex, at least composed of CUL4 (CUL4A or CUL4B), DDB1, DTL/CDT2 and RBX1.

Its subcellular location is the nucleus. The protein localises to the cytoplasm. It localises to the cytoskeleton. It is found in the microtubule organizing center. The protein resides in the centrosome. Its subcellular location is the chromosome. It participates in protein modification; protein ubiquitination. Functionally, substrate-specific adapter of a DCX (DDB1-CUL4-X-box) E3 ubiquitin-protein ligase complex required for cell cycle control, DNA damage response and translesion DNA synthesis. The DCX(DTL) complex, also named CRL4(CDT2) complex, mediates the polyubiquitination and subsequent degradation of CDT1, CDKN1A/p21(CIP1), KMT5A and SDE2. CDT1 degradation in response to DNA damage is necessary to ensure proper cell cycle regulation of DNA replication. CDKN1A/p21(CIP1) degradation during S phase or following UV irradiation is essential to control replication licensing. KMT5A degradation is also important for a proper regulation of mechanisms such as TGF-beta signaling, cell cycle progression, DNA repair and cell migration. Most substrates require their interaction with PCNA for their polyubiquitination: substrates interact with PCNA via their PIP-box, and those containing the 'K+4' motif in the PIP box, recruit the DCX(DTL) complex, leading to their degradation. In undamaged proliferating cells, the DCX(DTL) complex also promotes the 'Lys-164' monoubiquitination of PCNA, thereby being involved in PCNA-dependent translesion DNA synthesis. May play a role in the regulation of the circadian clock. This Gallus gallus (Chicken) protein is Denticleless protein homolog (DTL).